We begin with the raw amino-acid sequence, 291 residues long: HTH-type transcriptional activator AmpR (291 aa).

The HTH lysR-type domain occupies 6–63 (LPLNSLRAFEAAARHLSFTHAAIELNVTHSAISQHVKTLEQHLNCQLFVRVSRGLMLT). The segment at residues 23-42 (FTHAAIELNVTHSAISQHVK) is a DNA-binding region (H-T-H motif).

It belongs to the LysR transcriptional regulatory family.

It is found in the cytoplasm. In terms of biological role, this protein is a positive regulator of gene expression of cephalosporinase (AmpC). In Enterobacter cloacae, this protein is HTH-type transcriptional activator AmpR (ampR).